A 700-amino-acid chain; its full sequence is Phenylalanine ammonia-lyase hkm12 (700 aa).

Y82 functions as the Proton donor/acceptor in the catalytic mechanism. The segment at residues 183 to 185 (ASG) is a cross-link (5-imidazolinone (Ala-Gly)). 2,3-didehydroalanine (Ser) is present on S184. (E)-cinnamate contacts are provided by N242, Q325, R331, N361, K432, E460, and N463.

Belongs to the PAL/histidase family. Post-translationally, contains an active site 4-methylidene-imidazol-5-one (MIO), which is formed autocatalytically by cyclization and dehydration of residues Ala-Ser-Gly.

It catalyses the reaction L-phenylalanine = (E)-cinnamate + NH4(+). Its pathway is secondary metabolite biosynthesis. Phenylalanine ammonia-lyase; part of the gene cluster that mediates the biosynthesis of hancockiamides, an unusual new family of N-cinnamoylated piperazines. The NRPS hkm10 and the NmrA-like reductase hkm9 are proposed to convert two molecules of L-Phe to the intermediary piperazine called xenocockiamide A. Xenocockiamide A is then converted to hancockiamide D via a series of hydroxylations and O-methylations. The tyrosinase hkm6 may catalyze an aromatic hydroxylation, then the 2-oxoglutarate-dependent Fe(II) dioxygenase hkm4 and the FAD-dependent phenol hydroxylase hkm7 may catalyze consecutive hydroxylations to install 2 more hydroxy groups, and the methyltransferase hkm8 probably catalyzes two methylations using 2 molecules of S-adenosyl-L-methionine (SAM). The NRPS hkm11 activates and transfers trans-cinnamate supplied by the PAL hkm12 to hancockiamide D and produces hancockiamide A. NRPS Hkm11 has the flexibility to tolerate the bulky hancockiamide G as a substrate and the absence of the acetyl-transferase hkm3 opens up the opportunity for hkm11 to introduce a second N-cinnamoyl moiety. The cytochrome P450 monooxygenase hkm5 catalyzes the methylenedioxy bridge formation, converting hancockiamide A into hancockiamide G. Hkm5 can also convert hancockiamide B into hancockiamide C, and hancockiamide D into hancockiamide H. The N-acetyltransferase hkm3 finally transfers an acetyl group to 1-N of piperazine, converting hancockiamide A into hancockiamide B and hancockiamide G into hancockiamide C. This chain is Phenylalanine ammonia-lyase hkm12, found in Aspergillus hancockii.